Here is a 692-residue protein sequence, read N- to C-terminus: MARQFPLERTRNIGIMAHIDAGKTTTTERILFYTGRVHKIGEVHDGAATMDWMVQEQERGITITSAATTAQWNGHRVNIIDTPGHVDFTVEVERSLRVLDGAVAVFCSVGGVEPQSETVWRQADKYGVPRLAYINKMDRVGADFFNGMDMIKNRLGANPVAIQLPIGSEDRFKGIVDLVTKKAIVYIDDLGTNSETTDIPADMVDQVEEYREKLLEAVAESDEELMMKYLEGEELTEEEIKVAIRKATLAVKITPVICGSSFKNKGVQSLLDAIVDYLPAPTDVPPIQGVNPDTGTEDQRISSDNEPFAALAFKIMTDPYVGKLSYFRVYSGTLKSGSYVLNSTKGKKERVGRILQMHANHREEIPEVYAGDIAAAVGLKDTTTGDTLCDEKSLIILESMEFPDPVIHVAIEPKTKADQDKMGVALSKLSEEDPTFKVRTDEETGQTIIAGMGELHLEIIVDRLLREFKVQANVGRPQVAYKETIRKAVKAEGKFVRQSGGKGQYGHVWIELEPLEAGGPGYEFVNKIVGGVVPREYIAPVDNGIKEAMENGILAGYQMVDIKATLYDGSYHEVDSSEMAFKIAGSMAFKNGAQKANPVLLEPIFKVEVTVPEEYMGDVIGDLNSRRGRIEEMGQRGNARIVSAFVPLAEMFGYATDLRSKTQGRGTYSMQHDHYEEVPKNIAEGIIAKRKG.

A tr-type G domain is found at 8 to 282; the sequence is ERTRNIGIMA…AIVDYLPAPT (275 aa). GTP is bound by residues 17-24, 81-85, and 135-138; these read AHIDAGKT, DTPGH, and NKMD.

This sequence belongs to the TRAFAC class translation factor GTPase superfamily. Classic translation factor GTPase family. EF-G/EF-2 subfamily.

The protein localises to the cytoplasm. Its function is as follows. Catalyzes the GTP-dependent ribosomal translocation step during translation elongation. During this step, the ribosome changes from the pre-translocational (PRE) to the post-translocational (POST) state as the newly formed A-site-bound peptidyl-tRNA and P-site-bound deacylated tRNA move to the P and E sites, respectively. Catalyzes the coordinated movement of the two tRNA molecules, the mRNA and conformational changes in the ribosome. In Desulforamulus reducens (strain ATCC BAA-1160 / DSM 100696 / MI-1) (Desulfotomaculum reducens), this protein is Elongation factor G.